The sequence spans 387 residues: Putative purine permease 15 (387 aa).

10 consecutive transmembrane segments (helical) span residues 44–64 (WVTIIICTILAVTGQCIARLL), 84–104 (TLLQVVGFPILLLPFLLHFLI), 122–142 (LAITYSILCIYMFCQAFFSDV), 150–169 (VFTLTYTTQLLFTLIFSKYY), 179–199 (FISLILAVLAGAFTLYTFSAG), 210–230 (YGIINVAFGAAIFFSLLLCII), 252–272 (FVVVLEMIIFLSLVVTIILVA), 306–326 (VAWQIYWVGIVGLVFAVSAVF), 329–349 (VISVCTWPIVSLLVAFLYNTH), and 354–374 (VFRGIALGAAALSVSCYIYII).

The protein belongs to the purine permeases (TC 2.A.7.14) family.

The protein localises to the membrane. This is Putative purine permease 15 (PUP15) from Arabidopsis thaliana (Mouse-ear cress).